A 1291-amino-acid polypeptide reads, in one-letter code: Capping protein-inhibiting regulator of actin dynamics (1291 aa).

Phosphoserine is present on residues serine 7 and serine 28. Disordered stretches follow at residues lysine 48–glutamate 71, glutamine 84–isoleucine 137, histidine 159–lysine 221, lysine 234–arginine 253, glutamine 267–alanine 663, and leucine 701–threonine 1238. Serine 132 bears the Phosphoserine mark. Positions histidine 159 to tryptophan 176 are enriched in basic residues. A compositionally biased stretch (polar residues) spans glutamate 184–glutamine 199. Over residues glycine 201–lysine 221 the composition is skewed to basic and acidic residues. Residues leucine 270–glutamate 291 show a composition bias toward acidic residues. 3 stretches are compositionally biased toward basic and acidic residues: residues proline 302–glutamate 318, aspartate 326–lysine 461, and glutamate 470–proline 483. A required for interaction with actin-capping proteins region spans residues alanine 324 to aspartate 560. Threonine 482 bears the Phosphothreonine mark. 2 positions are modified to phosphoserine: serine 493 and serine 510. 2 stretches are compositionally biased toward basic and acidic residues: residues alanine 506–leucine 527 and glutamate 534–glycine 543. The segment covering glutamate 580–alanine 593 has biased composition (low complexity). Residues aspartate 594–threonine 612 are compositionally biased toward basic and acidic residues. Position 636 is a phosphoserine (serine 636). Position 639 is a phosphothreonine (threonine 639). Residues lysine 749 to glycine 778 are compositionally biased toward basic and acidic residues. At serine 867 the chain carries Phosphoserine. Positions threonine 875–aspartate 888 are enriched in low complexity. The segment covering glutamine 969 to glutamate 983 has biased composition (basic and acidic residues). Threonine 1033 is subject to Phosphothreonine. Phosphoserine is present on serine 1037. Residues glycine 1056–serine 1070 are compositionally biased toward basic and acidic residues. A Phosphoserine modification is found at serine 1076. 3 stretches are compositionally biased toward basic and acidic residues: residues glutamate 1081–proline 1098, threonine 1117–glutamate 1141, and glycine 1157–lysine 1182. 2 stretches are compositionally biased toward polar residues: residues glutamate 1183–serine 1197 and lysine 1229–threonine 1238.

Directly interacts with actin-capping proteins CAPZA1, CAPZA2 and CAPZB; this interaction decreases the binding of capping proteins to actin. Expressed in the small intestine (at protein level).

It localises to the cytoplasm. Its subcellular location is the cytosol. Functionally, involved in epithelial cell integrity by acting on the dynamics of the actin cytoskeleton. Positively regulates the actin polymerization, by inhibiting the interaction of actin-capping proteins with actin. The protein is Capping protein-inhibiting regulator of actin dynamics of Mus musculus (Mouse).